Here is a 722-residue protein sequence, read N- to C-terminus: MNQDRETLVFNKITKTFQFGRQTVTLETGEIARQASGSVVVSVDDTVVMVSVVGGKNVKPGQDFFPLTVDYLERTYAAGKIPGGFFKREGKQSEKEVLTSRLIDRPIRPLFPEGFYHDVQIVATVLSLNPEVDSDIPAMIGASAALAISGLPFAGPIGAARVGYANGEYILNPTKTELQTSQMDLVVAGTSRAVLMVESEAKELPEAVMLGAVVFGHEQMQAAIKAINELADEVNPVMFDWAAPAKDEALIAQIRGIAGEKLAEAFRLRQKQARTVAINEAWDAVKAGLINEETDTLKANEIKGIFKSLEAEIVRGQILAGEARIDGRDTRTVRPISIRNNVLPRTHGSALFTRGETQALVVATLGTKQDEQIIDALAGEYTERFMLHYNFPPYSTGEAGRMGPPKRREIGHGRLAKRALVAVLPPEDEFGYSMRVVSEITESNGSSSMASVCGGCLSLLSAGVPLKAHVAGIAMGLILEGNRFAVLTDILGDEDHLGDMDFKVAGTAAGVTALQMDIKIQGITKEIMQVALEQAKEGRLHILGLMKEAVDGPQELSAHAPRLYVMKINPEKIREVIGKGGETIRSITKDTGCEINIEEDGTITIASVSSEGAEAAKKRIEEITVEVEVGKVYEGTVVKILDNNVGAIVSILPGKDGLVHISQIANERIKNVSDYLKEGQVVKVKAIEMDDRGRIRLSIKALLEEEAKTAQATADAFGLKTQ.

Residues Asp-495 and Asp-501 each contribute to the Mg(2+) site. The region spanning 561–620 is the KH domain; the sequence is PRLYVMKINPEKIREVIGKGGETIRSITKDTGCEINIEEDGTITIASVSSEGAEAAKKRI. Residues 630–700 form the S1 motif domain; the sequence is GKVYEGTVVK…DRGRIRLSIK (71 aa).

The protein belongs to the polyribonucleotide nucleotidyltransferase family. It depends on Mg(2+) as a cofactor.

Its subcellular location is the cytoplasm. It carries out the reaction RNA(n+1) + phosphate = RNA(n) + a ribonucleoside 5'-diphosphate. Involved in mRNA degradation. Catalyzes the phosphorolysis of single-stranded polyribonucleotides processively in the 3'- to 5'-direction. The polypeptide is Polyribonucleotide nucleotidyltransferase (Chromobacterium violaceum (strain ATCC 12472 / DSM 30191 / JCM 1249 / CCUG 213 / NBRC 12614 / NCIMB 9131 / NCTC 9757 / MK)).